We begin with the raw amino-acid sequence, 545 residues long: E3 ubiquitin-protein ligase ipaH9.8 (545 aa).

The tract at residues methionine 1–methionine 242 is interaction with target proteins. 8 LRR repeats span residues asparagine 57–alanine 77, glutamine 78–leucine 99, lysine 100–proline 117, alanine 118–leucine 139, leucine 140–glutamine 157, alanine 158–asparagine 179, valine 182–leucine 203, and asparagine 205–threonine 228. Residues serine 243–leucine 250 form a linker region. The segment at histidine 251 to serine 545 is E3 ubiquitin-protein ligase catalytic domain. The NEL domain occupies proline 253 to serine 545. Cysteine 337 functions as the Glycyl thioester intermediate in the catalytic mechanism.

Belongs to the LRR-containing bacterial E3 ligase family. Also interacts with human and mouse U2AF1 (U2AF35). In terms of processing, ubiquitinated in the presence of host E1 ubiquitin-activating enzyme, E2 ubiquitin-conjugating enzyme and ubiquitin.

The protein localises to the secreted. It is found in the host cytoplasm. It localises to the host nucleus. It carries out the reaction S-ubiquitinyl-[E2 ubiquitin-conjugating enzyme]-L-cysteine + [acceptor protein]-L-lysine = [E2 ubiquitin-conjugating enzyme]-L-cysteine + N(6)-ubiquitinyl-[acceptor protein]-L-lysine.. With respect to regulation, exists in an autoinhibited state in the absence of substrate protein, due to interactions of the leucine-rich repeats with NEL domain. Is activated upon binding to a substrate protein. Its function is as follows. Effector E3 ubiquitin ligase that interferes with host's ubiquitination pathway and modulates the acute inflammatory responses, thus facilitating bacterial colonization within the host cell. Interacts with IKBKG (NEMO) and TNIP1 (ABIN-1), a ubiquitin-binding adapter protein, which results in TNIP1-dependent 'Lys-27'-linked polyubiquitination of IKBKG. Consequently, polyubiquitinated IKBKG undergoes proteasome-dependent degradation, which perturbs NF-kappa-B activation during bacterial infection. Mediates polyubiquitination of host U2AF1, leading to its proteasomal degradation. Catalyzes 'Lys-48'-linked polyubiquitination and subsequent degradation of a subset of host guanylate-binding proteins (GBP1, GBP2, GBP4 and GBP6), thereby suppressing host cell defense. In contrast, host GBP3 and GBP7 are not ubiquitinated by IpaH9.8. Uses UBE2D2 (UBCH5B) as an E2 ubiquitin-conjugating enzyme. This chain is E3 ubiquitin-protein ligase ipaH9.8 (ipaH9.8), found in Shigella dysenteriae serotype 1 (strain Sd197).